The primary structure comprises 142 residues: MVLSAADKTNVKGVFSKIGGHAEEYGAETLERMFIAYPQTKTYFPHFDLSHGSAQIKAHGKKVAAALVEAVNHIDDIAGALSKLSDLHAQKLRVDPVNFKFLGHCFLVVVAIHHPAALTPEVHASLDKFLCAVGAVLTAKYR.

The Globin domain occupies Val-2 to Arg-142. His-59 is an O2 binding site. His-88 provides a ligand contact to heme b.

It belongs to the globin family. In terms of assembly, heterotetramer of two alpha chains and two beta chains. Red blood cells.

Involved in oxygen transport from the lung to the various peripheral tissues. This Mareca penelope (Eurasian wigeon) protein is Hemoglobin subunit alpha-A (HBAA).